A 240-amino-acid chain; its full sequence is Phosphoribosylaminoimidazole-succinocarboxamide synthase (240 aa).

It belongs to the SAICAR synthetase family.

It catalyses the reaction 5-amino-1-(5-phospho-D-ribosyl)imidazole-4-carboxylate + L-aspartate + ATP = (2S)-2-[5-amino-1-(5-phospho-beta-D-ribosyl)imidazole-4-carboxamido]succinate + ADP + phosphate + 2 H(+). It functions in the pathway purine metabolism; IMP biosynthesis via de novo pathway; 5-amino-1-(5-phospho-D-ribosyl)imidazole-4-carboxamide from 5-amino-1-(5-phospho-D-ribosyl)imidazole-4-carboxylate: step 1/2. This is Phosphoribosylaminoimidazole-succinocarboxamide synthase from Neorickettsia sennetsu (strain ATCC VR-367 / Miyayama) (Ehrlichia sennetsu).